The chain runs to 422 residues: Glutamyl-tRNA reductase (422 aa).

Residues 49-52, S107, 112-114, and Q118 contribute to the substrate site; these read TCNR and EPQ. C50 serves as the catalytic Nucleophile. 187–192 is a binding site for NADP(+); the sequence is GAGETI.

The protein belongs to the glutamyl-tRNA reductase family. Homodimer.

It catalyses the reaction (S)-4-amino-5-oxopentanoate + tRNA(Glu) + NADP(+) = L-glutamyl-tRNA(Glu) + NADPH + H(+). The protein operates within porphyrin-containing compound metabolism; protoporphyrin-IX biosynthesis; 5-aminolevulinate from L-glutamyl-tRNA(Glu): step 1/2. Functionally, catalyzes the NADPH-dependent reduction of glutamyl-tRNA(Glu) to glutamate 1-semialdehyde (GSA). This chain is Glutamyl-tRNA reductase, found in Stutzerimonas stutzeri (strain A1501) (Pseudomonas stutzeri).